The sequence spans 359 residues: DNA integrity scanning protein DisA (359 aa).

Residues 7–146 (DDIFRATLAA…GRRYVLDGSA (140 aa)) enclose the DAC domain. Residues Gly74, Leu92, and 105 to 109 (TRHRT) each bind ATP.

The protein belongs to the DisA family. As to quaternary structure, homooctamer. It depends on Mg(2+) as a cofactor.

It catalyses the reaction 2 ATP = 3',3'-c-di-AMP + 2 diphosphate. Its function is as follows. Participates in a DNA-damage check-point that is active prior to asymmetric division when DNA is damaged. DisA forms globular foci that rapidly scan along the chromosomes during sporulation, searching for lesions. When a lesion is present, DisA pauses at the lesion site. This triggers a cellular response that culminates in a temporary block in sporulation initiation. In terms of biological role, also has diadenylate cyclase activity, catalyzing the condensation of 2 ATP molecules into cyclic di-AMP (c-di-AMP). c-di-AMP acts as a signaling molecule that couples DNA integrity with progression of sporulation. The rise in c-di-AMP level generated by DisA while scanning the chromosome, operates as a positive signal that advances sporulation; upon encountering a lesion, the DisA focus arrests at the damaged site and halts c-di-AMP synthesis. The polypeptide is DNA integrity scanning protein DisA (Frankia alni (strain DSM 45986 / CECT 9034 / ACN14a)).